A 115-amino-acid chain; its full sequence is Probable 4-amino-4-deoxy-L-arabinose-phosphoundecaprenol flippase subunit ArnE (115 aa).

A run of 3 helical transmembrane segments spans residues 42–62 (PWPW…LLLL), 65–85 (VEVG…TLAA), and 93–112 (VDRR…VLLG). The EamA domain maps to 46–113 (LALLALGLGL…IVAGVVLLGR (68 aa)).

This sequence belongs to the ArnE family. Heterodimer of ArnE and ArnF.

Its subcellular location is the cell inner membrane. Its pathway is bacterial outer membrane biogenesis; lipopolysaccharide biosynthesis. In terms of biological role, translocates 4-amino-4-deoxy-L-arabinose-phosphoundecaprenol (alpha-L-Ara4N-phosphoundecaprenol) from the cytoplasmic to the periplasmic side of the inner membrane. The polypeptide is Probable 4-amino-4-deoxy-L-arabinose-phosphoundecaprenol flippase subunit ArnE (Pseudomonas aeruginosa (strain UCBPP-PA14)).